The sequence spans 290 residues: Shikimate dehydrogenase (NADP(+)) (290 aa).

Residues 19 to 21 and Ser65 contribute to the shikimate site; that span reads SLS. The active-site Proton acceptor is the Lys69. Shikimate-binding residues include Asn90 and Asp105. NADP(+)-binding positions include 129–133 and Leu231; that span reads GAGGA. Tyr233 serves as a coordination point for shikimate. An NADP(+)-binding site is contributed by Gly254.

Belongs to the shikimate dehydrogenase family. In terms of assembly, homodimer.

The enzyme catalyses shikimate + NADP(+) = 3-dehydroshikimate + NADPH + H(+). It participates in metabolic intermediate biosynthesis; chorismate biosynthesis; chorismate from D-erythrose 4-phosphate and phosphoenolpyruvate: step 4/7. Involved in the biosynthesis of the chorismate, which leads to the biosynthesis of aromatic amino acids. Catalyzes the reversible NADPH linked reduction of 3-dehydroshikimate (DHSA) to yield shikimate (SA). The protein is Shikimate dehydrogenase (NADP(+)) of Latilactobacillus sakei subsp. sakei (strain 23K) (Lactobacillus sakei subsp. sakei).